The primary structure comprises 590 residues: Protein O-linked-mannose beta-1,4-N-acetylglucosaminyltransferase 2 (590 aa).

Residues 1–4 (MSVG) are Cytoplasmic-facing. The helical; Signal-anchor for type II membrane protein transmembrane segment at 5–25 (TLLNGLLVSIVAALLWKYSKL) threads the bilayer. Topologically, residues 26 to 590 (SEHAALLEEE…PFADVLMCRT (565 aa)) are lumenal. 3 N-linked (GlcNAc...) asparagine glycosylation sites follow: Asn-98, Asn-275, and Asn-553. Residues 494–590 (RVRDPQCQTS…PFADVLMCRT (97 aa)) enclose the Fibronectin type-III domain.

This sequence belongs to the glycosyltransferase 61 family.

The protein localises to the endoplasmic reticulum membrane. It catalyses the reaction 3-O-(alpha-D-mannosyl)-L-threonyl-[protein] + UDP-N-acetyl-alpha-D-glucosamine = 3-O-(N-acetyl-beta-D-glucosaminyl-(1-&gt;4)-alpha-D-mannosyl)-L-threonyl-[protein] + UDP + H(+). Its pathway is protein modification; protein glycosylation. Its function is as follows. O-linked mannose beta-1,4-N-acetylglucosaminyltransferase that transfers UDP-N-acetyl-D-glucosamine to the 4-position of the mannose to generate N-acetyl-D-glucosamine-beta-1,4-O-D-mannosylprotein. Involved in the biosynthesis of the phosphorylated O-mannosyl trisaccharide (N-acetylgalactosamine-beta-3-N-acetylglucosamine-beta-4-(phosphate-6-)mannose), a carbohydrate structure present in alpha-dystroglycan (DAG1), which is required for binding laminin G-like domain-containing extracellular proteins with high affinity. This chain is Protein O-linked-mannose beta-1,4-N-acetylglucosaminyltransferase 2 (pomgnt2), found in Takifugu rubripes (Japanese pufferfish).